Here is a 428-residue protein sequence, read N- to C-terminus: Ribulose bisphosphate carboxylase (428 aa).

K151 serves as the catalytic Proton acceptor. K153 is a binding site for substrate. Mg(2+) contacts are provided by K177, D179, and E180. At K177 the chain carries N6-carboxylysine. H270 functions as the Proton acceptor in the catalytic mechanism. Residues R271, H303, 354–356 (SGG), and 376–379 (QFGG) each bind substrate.

It belongs to the RuBisCO large chain family. Type III subfamily. As to quaternary structure, homodimer or homodecamer. In contrast to form I RuBisCO, the form III RuBisCO is composed solely of large subunits. Mg(2+) serves as cofactor.

It carries out the reaction 2 (2R)-3-phosphoglycerate + 2 H(+) = D-ribulose 1,5-bisphosphate + CO2 + H2O. It catalyses the reaction D-ribulose 1,5-bisphosphate + O2 = 2-phosphoglycolate + (2R)-3-phosphoglycerate + 2 H(+). Catalyzes the addition of molecular CO(2) and H(2)O to ribulose 1,5-bisphosphate (RuBP), generating two molecules of 3-phosphoglycerate (3-PGA). Functions in an archaeal AMP degradation pathway, together with AMP phosphorylase and R15P isomerase. In Methanosarcina barkeri (strain Fusaro / DSM 804), this protein is Ribulose bisphosphate carboxylase.